The chain runs to 206 residues: Small ribosomal subunit protein uS4 (206 aa).

An S4 RNA-binding domain is found at 96 to 157 (SRLDNVVYRM…KAKNQARIQN (62 aa)).

It belongs to the universal ribosomal protein uS4 family. In terms of assembly, part of the 30S ribosomal subunit. Contacts protein S5. The interaction surface between S4 and S5 is involved in control of translational fidelity.

Its function is as follows. One of the primary rRNA binding proteins, it binds directly to 16S rRNA where it nucleates assembly of the body of the 30S subunit. With S5 and S12 plays an important role in translational accuracy. This chain is Small ribosomal subunit protein uS4, found in Chromohalobacter salexigens (strain ATCC BAA-138 / DSM 3043 / CIP 106854 / NCIMB 13768 / 1H11).